The sequence spans 540 residues: Mitochondrial distribution and morphology protein 34 (540 aa).

The region spanning 1 to 208 is the SMP-LTD domain; it reads MSFKFNSGTF…LPSVIFNMSQ (208 aa). Disordered regions lie at residues 26-51 and 379-399; these read ALNPSRFENPESTSGQDGSDSQKKPK and RSKSVQDTAAKMHPVPESGSL. The span at 35 to 44 shows a compositional bias: polar residues; sequence PESTSGQDGS.

Belongs to the MDM34 family. In terms of assembly, component of the ER-mitochondria encounter structure (ERMES) or MDM complex, composed of MMM1, MDM10, MDM12 and MDM34.

It localises to the mitochondrion outer membrane. In terms of biological role, component of the ERMES/MDM complex, which serves as a molecular tether to connect the endoplasmic reticulum (ER) and mitochondria. Components of this complex are involved in the control of mitochondrial shape and protein biogenesis, and function in nonvesicular lipid trafficking between the ER and mitochondria. MDM34 is required for the interaction of the ER-resident membrane protein MMM1 and the outer mitochondrial membrane-resident beta-barrel protein MDM10. This Kluyveromyces lactis (strain ATCC 8585 / CBS 2359 / DSM 70799 / NBRC 1267 / NRRL Y-1140 / WM37) (Yeast) protein is Mitochondrial distribution and morphology protein 34.